Consider the following 362-residue polypeptide: Sulfate/thiosulfate import ATP-binding protein CysA (362 aa).

The region spanning isoleucine 13–leucine 243 is the ABC transporter domain. Glycine 45–serine 52 serves as a coordination point for ATP.

The protein belongs to the ABC transporter superfamily. Sulfate/tungstate importer (TC 3.A.1.6) family. In terms of assembly, the complex is composed of two ATP-binding proteins (CysA), two transmembrane proteins (CysT and CysW) and a solute-binding protein (CysP).

The protein resides in the cell membrane. The catalysed reaction is sulfate(out) + ATP + H2O = sulfate(in) + ADP + phosphate + H(+). It carries out the reaction thiosulfate(out) + ATP + H2O = thiosulfate(in) + ADP + phosphate + H(+). Functionally, part of the ABC transporter complex CysAWTP involved in sulfate/thiosulfate import. Responsible for energy coupling to the transport system. This is Sulfate/thiosulfate import ATP-binding protein CysA from Mycolicibacterium paratuberculosis (strain ATCC BAA-968 / K-10) (Mycobacterium paratuberculosis).